A 76-amino-acid polypeptide reads, in one-letter code: Omega-scoloptoxin(13)-Ssm2a (76 aa).

The signal sequence occupies residues 1 to 22 (MAYIYALIFAIVVCMNTDVIQA).

Post-translationally, contains 4 disulfide bonds. As to expression, expressed by the venom gland.

It localises to the secreted. Its function is as follows. Inhibits voltage-gated calcium channel (Cav) currents in DRG neurons (IC(50)=1590 nM). This is Omega-scoloptoxin(13)-Ssm2a from Scolopendra mutilans (Chinese red-headed centipede).